A 1071-amino-acid chain; its full sequence is ATP-dependent helicase/deoxyribonuclease subunit B (1071 aa).

The protein belongs to the helicase family. AddB/RexB type 2 subfamily. In terms of assembly, heterodimer of AddA and RexB. Mg(2+) is required as a cofactor.

Its function is as follows. The heterodimer acts as both an ATP-dependent DNA helicase and an ATP-dependent, dual-direction single-stranded exonuclease. Recognizes the chi site generating a DNA molecule suitable for the initiation of homologous recombination. This subunit has 5' -&gt; 3' nuclease activity but not helicase activity. This Streptococcus pyogenes serotype M12 (strain MGAS9429) protein is ATP-dependent helicase/deoxyribonuclease subunit B.